Consider the following 393-residue polypeptide: S-adenosylmethionine synthase (393 aa).

An ATP-binding site is contributed by H16. D18 contacts Mg(2+). E44 contributes to the K(+) binding site. The L-methionine site is built by E57 and Q100. Positions 100–110 (QSNDIAQGVDH) are flexible loop. ATP is bound by residues 167 to 169 (DAK), 238 to 239 (RF), D247, 253 to 254 (RK), A270, and K274. D247 contacts L-methionine. Position 278 (K278) interacts with L-methionine.

Belongs to the AdoMet synthase family. In terms of assembly, homotetramer; dimer of dimers. Mg(2+) serves as cofactor. K(+) is required as a cofactor.

The protein localises to the cytoplasm. The catalysed reaction is L-methionine + ATP + H2O = S-adenosyl-L-methionine + phosphate + diphosphate. Its pathway is amino-acid biosynthesis; S-adenosyl-L-methionine biosynthesis; S-adenosyl-L-methionine from L-methionine: step 1/1. Its function is as follows. Catalyzes the formation of S-adenosylmethionine (AdoMet) from methionine and ATP. The overall synthetic reaction is composed of two sequential steps, AdoMet formation and the subsequent tripolyphosphate hydrolysis which occurs prior to release of AdoMet from the enzyme. This Acidovorax ebreus (strain TPSY) (Diaphorobacter sp. (strain TPSY)) protein is S-adenosylmethionine synthase.